An 896-amino-acid chain; its full sequence is Protein translocase subunit SecA (896 aa).

ATP is bound by residues glutamine 87, 105–109, and aspartate 507; that span reads GEGKT. The segment at 855 to 879 is disordered; that stretch reads LSENDEASETQTFRRQEKKIGRNDP. The segment covering 866 to 876 has biased composition (basic and acidic residues); sequence TFRRQEKKIGR. Cysteine 880, cysteine 882, cysteine 891, and histidine 892 together coordinate Zn(2+).

The protein belongs to the SecA family. Monomer and homodimer. Part of the essential Sec protein translocation apparatus which comprises SecA, SecYEG and auxiliary proteins SecDF-YajC and YidC. The cofactor is Zn(2+).

It is found in the cell inner membrane. Its subcellular location is the cytoplasm. It catalyses the reaction ATP + H2O + cellular proteinSide 1 = ADP + phosphate + cellular proteinSide 2.. In terms of biological role, part of the Sec protein translocase complex. Interacts with the SecYEG preprotein conducting channel. Has a central role in coupling the hydrolysis of ATP to the transfer of proteins into and across the cell membrane, serving both as a receptor for the preprotein-SecB complex and as an ATP-driven molecular motor driving the stepwise translocation of polypeptide chains across the membrane. The sequence is that of Protein translocase subunit SecA from Legionella pneumophila (strain Lens).